A 152-amino-acid polypeptide reads, in one-letter code: Interleukin-2 (152 aa).

Residues 1 to 20 form the signal peptide; it reads MYRMQLLSCIALTLALVANG. T23 carries an O-linked (GalNAc...) threonine glycan. Residues C78 and C126 are joined by a disulfide bond.

The protein belongs to the IL-2 family.

It localises to the secreted. Cytokine produced by activated CD4-positive helper T-cells and to a lesser extend activated CD8-positive T-cells and natural killer (NK) cells that plays pivotal roles in the immune response and tolerance. Binds to a receptor complex composed of either the high-affinity trimeric IL-2R (IL2RA/CD25, IL2RB/CD122 and IL2RG/CD132) or the low-affinity dimeric IL-2R (IL2RB and IL2RG). Interaction with the receptor leads to oligomerization and conformation changes in the IL-2R subunits resulting in downstream signaling starting with phosphorylation of JAK1 and JAK3. In turn, JAK1 and JAK3 phosphorylate the receptor to form a docking site leading to the phosphorylation of several substrates including STAT5. This process leads to activation of several pathways including STAT, phosphoinositide-3-kinase/PI3K and mitogen-activated protein kinase/MAPK pathways. Functions as a T-cell growth factor and can increase NK-cell cytolytic activity as well. Promotes strong proliferation of activated B-cells and subsequently immunoglobulin production. Plays a pivotal role in regulating the adaptive immune system by controlling the survival and proliferation of regulatory T-cells, which are required for the maintenance of immune tolerance. Moreover, participates in the differentiation and homeostasis of effector T-cell subsets, including Th1, Th2, Th17 as well as memory CD8-positive T-cells. In Orcinus orca (Killer whale), this protein is Interleukin-2 (IL2).